Here is a 201-residue protein sequence, read N- to C-terminus: Small ribosomal subunit protein uS4c (201 aa).

In terms of domain architecture, S4 RNA-binding spans 89 to 152 (MRLDNILFRL…NSRTLVQNLL (64 aa)).

Belongs to the universal ribosomal protein uS4 family. Part of the 30S ribosomal subunit. Contacts protein S5. The interaction surface between S4 and S5 is involved in control of translational fidelity.

The protein resides in the plastid. It localises to the chloroplast. Functionally, one of the primary rRNA binding proteins, it binds directly to 16S rRNA where it nucleates assembly of the body of the 30S subunit. With S5 and S12 plays an important role in translational accuracy. This chain is Small ribosomal subunit protein uS4c (rps4), found in Capsella bursa-pastoris (Shepherd's purse).